Here is a 529-residue protein sequence, read N- to C-terminus: MRRNSSLSFQMERPLEEQVQSKWSSSQGRTGTGGSDVLQMQNSEHHGQSIKTQTDSISLEDVAVNFTLEEWALLDPGQRNIYRDVMRATFKNLACIGEKWKDQDIEDEHKNQGRNLRSPMVEALCENKEDCPCGKSTSQIPDLNTNLETPTGLKPCDCSVCGEVFMHQVSLNRHMRSHTEQKPNECHEYGEKPHKCKECGKTFTRSSSIRTHERIHTGEKPYECKECGKAFAFLFSFRNHIRIHTGETPYECKECGKAFRYLTALRRHEKNHTGEKPYKCKQCGKAFIYYQPFLTHERTHTGEKPYECKQCGKAFSCPTYLRSHEKTHTGEKPFVCRECGRAFFSHSSLRKHVKTHTGVQPYTCKKCGEAFKSSSSCEVHERTHFGEKPYECKQCGKAFNSSSYLQLHERVHTGEKTYECKECGKAFLYSTHFRIHERTHTREKPYECKQCGRVFIYFSHLRRHERSHTGVKPCECKQCGKAFTCLNSLKVHKRIHTGERPFQCRQCGKAFSYSKSLHVHERTHSRQKP.

Positions 1–53 are disordered; it reads MRRNSSLSFQMERPLEEQVQSKWSSSQGRTGTGGSDVLQMQNSEHHGQSIKTQ. A KRAB domain is found at 57–132; it reads ISLEDVAVNF…ALCENKEDCP (76 aa). 13 consecutive C2H2-type zinc fingers follow at residues 156-178, 194-216, 222-244, 250-272, 278-300, 306-328, 334-356, 362-384, 390-412, 418-440, 446-468, 474-496, and 502-524; these read CDCS…MRSH, HKCK…ERIH, YECK…IRIH, YECK…EKNH, YKCK…ERTH, YECK…EKTH, FVCR…VKTH, YTCK…ERTH, YECK…ERVH, YECK…ERTH, YECK…ERSH, CECK…KRIH, and FQCR…ERTH.

It belongs to the krueppel C2H2-type zinc-finger protein family.

It localises to the nucleus. Functionally, may be involved in transcriptional regulation. The protein is Zinc finger protein 490 (ZNF490) of Homo sapiens (Human).